The primary structure comprises 324 residues: Archaeosine synthase subunit beta (324 aa).

A Radical SAM core domain is found at 12 to 254 (GKPGTALFII…LIWAKRKFPN (243 aa)). Cys-27, Cys-36, and Cys-39 together coordinate [4Fe-4S] cluster.

This sequence belongs to the radical SAM superfamily. RaSEA family. In terms of assembly, forms a robust complex with the archaeosine synthase alpha subunit ArcS, likely an alpha(2)beta(2) heterotetrameric structure. The cofactor is [4Fe-4S] cluster.

The catalysed reaction is 7-N-[(5S)-5-amino-5-carboxypentyl]formamidino-7-deazaguanosine(15) in tRNA + S-adenosyl-L-methionine = archaeosine(15) in tRNA + L-1-piperideine-6-carboxylate + 5'-deoxyadenosine + L-methionine + 2 H(+). The protein operates within tRNA modification; archaeosine-tRNA biosynthesis. In terms of biological role, radical SAM enzyme involved in the synthesis of archaeosine, a modified nucleoside present in the dihydrouridine loop (D-loop) of archaeal tRNAs. Catalyzes the cleavage of the C(epsilon)-N bond of the lysine moiety of q0kN15-tRNA, leading to the formation of archaeosine at position 15 in tRNAs. In Thermococcus kodakarensis (strain ATCC BAA-918 / JCM 12380 / KOD1) (Pyrococcus kodakaraensis (strain KOD1)), this protein is Archaeosine synthase subunit beta.